The primary structure comprises 627 residues: E3 ubiquitin-protein ligase DTX1 (627 aa).

WWE domains are found at residues 14–94 (GLGF…PVRR) and 95–171 (NFYD…RLRR). Disordered stretches follow at residues 222-254 (QRRKAPIAPAAPPAPPPPPPPLPPGGPPGALVV), 269-327 (PATG…ALPV), and 368-398 (PPVSKSDVKPVPGVPGVCRKTKKKHLKKSKN). 2 stretches are compositionally biased toward pro residues: residues 230–248 (PAAPPAPPPPPPPLPPGGP) and 275–287 (EPAPPPGVPPRSP). Residues 240–243 (PPPL) carry the SH3-binding motif. Residues 296–314 (PGQNNLSRPGPQRSTSVSA) show a composition bias toward polar residues. The span at 386 to 396 (RKTKKKHLKKS) shows a compositional bias: basic residues. The RING-type zinc-finger motif lies at 418-479 (CTICMERLVT…DGSLQCPTCK (62 aa)).

This sequence belongs to the Deltex family. As to quaternary structure, homodimer. May form a heterodimer with other members of the Deltex family. Interacts with NOTCH1 via its N-terminal region and EIF3F, the interaction is required for NOTCH1 deubiquitination. Interacts with EP300. Forms a heterodimer with BBAP; the heterodimerization leading to an increase of in vitro ubiquitin ligase activity. Interacts with ITCH. Post-translationally, ubiquitinated; undergoes 'Lys-29'-linked polyubiquitination catalyzed by ITCH. In terms of tissue distribution, predominantly expressed in the brain and testis. Weakly expressed in the thymus, spleen and ovary. Predominantly expressed in regions containing post-mitotic differentiating neurons.

Its subcellular location is the cytoplasm. It is found in the nucleus. The enzyme catalyses S-ubiquitinyl-[E2 ubiquitin-conjugating enzyme]-L-cysteine + [acceptor protein]-L-lysine = [E2 ubiquitin-conjugating enzyme]-L-cysteine + N(6)-ubiquitinyl-[acceptor protein]-L-lysine.. The protein operates within protein modification; protein ubiquitination. In terms of biological role, regulator of Notch signaling, a signaling pathway involved in cell-cell communications that regulates a broad spectrum of cell-fate determinations. Mainly acts as a positive regulator of Notch, but it also acts as a negative regulator, depending on the developmental and cell context. Mediates the antineural activity of Notch, possibly by inhibiting the transcriptional activation mediated by MATCH1. Involved in neurogenesis, lymphogenesis and myogenesis, and may also be involved in MZB (Marginal zone B) cell differentiation. Promotes B-cell development at the expense of T-cell development, suggesting that it can antagonize NOTCH1. Functions as an ubiquitin ligase protein in vivo, mediating ubiquitination and promoting degradation of MEKK1, suggesting that it may regulate the Notch pathway via some ubiquitin ligase activity. This Mus musculus (Mouse) protein is E3 ubiquitin-protein ligase DTX1 (Dtx1).